The primary structure comprises 487 residues: UDP-N-acetylmuramate--L-alanine ligase (487 aa).

Gly-122–Ser-128 is an ATP binding site.

Belongs to the MurCDEF family.

It is found in the cytoplasm. It carries out the reaction UDP-N-acetyl-alpha-D-muramate + L-alanine + ATP = UDP-N-acetyl-alpha-D-muramoyl-L-alanine + ADP + phosphate + H(+). It participates in cell wall biogenesis; peptidoglycan biosynthesis. In terms of biological role, cell wall formation. This chain is UDP-N-acetylmuramate--L-alanine ligase, found in Corynebacterium urealyticum (strain ATCC 43042 / DSM 7109).